Consider the following 885-residue polypeptide: Exosome complex component 10 (885 aa).

A Glycyl lysine isopeptide (Lys-Gly) (interchain with G-Cter in SUMO2) cross-link involves residue Lys-19. The region spanning His-289–Met-455 is the 3'-5' exonuclease domain. Positions 313, 315, 371, and 440 each coordinate Mg(2+). Residues Asn-503–Lys-583 form the HRDC domain. Residue Lys-583 forms a Glycyl lysine isopeptide (Lys-Gly) (interchain with G-Cter in SUMO1); alternate linkage. Lys-583 participates in a covalent cross-link: Glycyl lysine isopeptide (Lys-Gly) (interchain with G-Cter in SUMO2); alternate. Lys-710 is covalently cross-linked (Glycyl lysine isopeptide (Lys-Gly) (interchain with G-Cter in SUMO2)). 2 stretches are compositionally biased toward basic and acidic residues: residues Ala-776–Gln-794 and Lys-804–Thr-816. The segment at Ala-776–Arg-885 is disordered. At Ser-821 the chain carries Phosphoserine. Glycyl lysine isopeptide (Lys-Gly) (interchain with G-Cter in SUMO2) cross-links involve residues Lys-826, Lys-833, and Lys-859. The span at Asn-831–Ser-848 shows a compositional bias: polar residues. Positions Ser-861 to Thr-871 are enriched in polar residues. Residue Lys-873 forms a Glycyl lysine isopeptide (Lys-Gly) (interchain with G-Cter in SUMO2) linkage.

The protein belongs to the exosome component 10/RRP6 family. Component of the RNA exosome complex. The catalytically inactive RNA exosome core complex (Exo-9) associates with the catalytic subunit EXOSC10/RRP6 (via its N-terminus). Exo-9 may associate with DIS3 to form the nucleolar exosome complex, or DIS3L to form the cytoplasmic exosome complex. The RNA exosome complex interacts with cofactors C1D/RRP47, MPHOSPH6/MPP6 and MTREX/MTR4. Interacts with MTREX; the interaction with MTREX mediates the association of MTREX with nuclear RNA exosomes. Part of the small subunit (SSU) processome, composed of more than 70 proteins and the RNA chaperone small nucleolar RNA (snoRNA) U3. Interacts with ALYREF/THOC4. Interacts with DHX36; this interaction occurs in a RNase-insensitive manner. Interacts with NRDE2. Interacts (via C-terminus) with USP36 (via C-terminus); the interaction is facilitated by the association with RNA and promotes sumoylation of EXOSC10. Requires Mg(2+) as cofactor. Sumoylated by USP36; sumoylation does not significantly affect EXOSC10 nucleolar localization and association with core exosome and USP36, but regulates the nucleolar RNA exosome activity in rRNA processing by promoting binding of EXOSC10 to pre-rRNAs. Effects of sumoylation on EXOSC10 levels vary between different studies. Sumoylation of EXOSC10 is required for the modulation of EXOSC10 effects on cellular protein translation and cell proliferation. Sumoylation is promoted by mild hypothermia.

It localises to the cytoplasm. It is found in the nucleus. Its subcellular location is the nucleolus. The protein resides in the nucleoplasm. Its activity is regulated as follows. Arginine-rich dipeptide repeat proteins expressed from C9orf72-derived repeat RNA interact with EXOSC10 and inhibit its ability to promote degradation of this RNA. Its function is as follows. Catalytic component of the RNA exosome complex which has 3'-&gt;5' exoribonuclease activity and participates in a multitude of cellular RNA processing and degradation events. In the nucleus, the RNA exosome complex is involved in proper maturation of stable RNA species such as rRNA, snRNA and snoRNA, in the elimination of RNA processing by-products and non-coding 'pervasive' transcripts, such as antisense RNA species and promoter-upstream transcripts (PROMPTs), and of mRNAs with processing defects, thereby limiting or excluding their export to the cytoplasm. Part of the small subunit (SSU) processome, first precursor of the small eukaryotic ribosomal subunit. During the assembly of the SSU processome in the nucleolus, many ribosome biogenesis factors, an RNA chaperone and ribosomal proteins associate with the nascent pre-rRNA and work in concert to generate RNA folding, modifications, rearrangements and cleavage as well as targeted degradation of pre-ribosomal RNA by the RNA exosome. The RNA exosome may be involved in Ig class switch recombination (CSR) and/or Ig variable region somatic hypermutation (SHM) by targeting AICDA deamination activity to transcribed dsDNA substrates. In the cytoplasm, the RNA exosome complex is involved in general mRNA turnover and specifically degrades inherently unstable mRNAs containing AU-rich elements (AREs) within their 3' untranslated regions, and in RNA surveillance pathways, preventing translation of aberrant mRNAs. It seems to be involved in degradation of histone mRNA. EXOSC10 is required for nucleolar localization of C1D and probably mediates the association of MTREX, C1D and MPHOSPH6 with the RNA exosome involved in the maturation of 5.8S rRNA. Plays a role in the recruitment of replication protein A complex (RPA) and RAD51 to DNA double-strand breaks caused by irradiation, contributing to DNA repair by homologous recombination. Regulates levels of damage-induced RNAs in order to prevent DNA-RNA hybrid formation at DNA double-strand breaks and limit DNA end resection after damage. Plays a role in oocyte development, maturation and survival. Required for normal testis development and mitotic division of spermatogonia. Plays a role in proper embryo development. Required for global protein translation. Required for cell proliferation. Regulates metabolism of C9orf72-derived repeat RNA that can be translated into toxic dipeptide repeat proteins. The chain is Exosome complex component 10 from Homo sapiens (Human).